The following is a 445-amino-acid chain: Rab GDP dissociation inhibitor beta (445 aa).

Met1 is subject to N-acetylmethionine. At Lys57 the chain carries N6-succinyllysine. Position 112 is an N6-acetyllysine (Lys112). Ser130 carries the post-translational modification Phosphoserine. Lys269 is subject to N6-acetyllysine. Ser382 carries the post-translational modification Phosphoserine.

Belongs to the Rab GDI family. In terms of assembly, interacts with RHOH. Interacts with the GDP-bound inactive forms of RAB3A, RAB3B, RAB3C, RAB5A, RAB5B, RAB5C, RAB8A, RAB8B, RAB10, RAB12, RAB35, and RAB43; binds RAB3D to a lesser extent. Interacts with DZIP1; this interaction negatively regulates the interaction of GDI2 with GDP-bound RAB8A. As to expression, ubiquitously expressed.

It is found in the cytoplasm. The protein localises to the membrane. Its subcellular location is the golgi apparatus. The protein resides in the trans-Golgi network. In terms of biological role, GDP-dissociation inhibitor preventing the GDP to GTP exchange of most Rab proteins. By keeping these small GTPases in their inactive GDP-bound form regulates intracellular membrane trafficking. Negatively regulates protein transport to the cilium and ciliogenesis through the inhibition of RAB8A. The polypeptide is Rab GDP dissociation inhibitor beta (GDI2) (Bos taurus (Bovine)).